We begin with the raw amino-acid sequence, 729 residues long: Fatty acid oxidation complex subunit alpha (729 aa).

The segment at 1-189 (MLYKGDTLYL…KIGLVDGVVK (189 aa)) is enoyl-CoA hydratase/isomerase. Position 296 (Asp296) interacts with substrate. Positions 311 to 729 (ETPKQAAVLG…ARPVGSLKTA (419 aa)) are 3-hydroxyacyl-CoA dehydrogenase. NAD(+) is bound by residues Met324, Asp343, 400-402 (VVE), Lys407, and Ser429. His450 functions as the For 3-hydroxyacyl-CoA dehydrogenase activity in the catalytic mechanism. NAD(+) is bound at residue Asn453. Substrate-binding residues include Asn500 and Tyr660. Residues 708-729 (RHNEPYYPPVEPARPVGSLKTA) are disordered.

In the N-terminal section; belongs to the enoyl-CoA hydratase/isomerase family. The protein in the C-terminal section; belongs to the 3-hydroxyacyl-CoA dehydrogenase family. As to quaternary structure, heterotetramer of two alpha chains (FadB) and two beta chains (FadA).

It carries out the reaction a (3S)-3-hydroxyacyl-CoA + NAD(+) = a 3-oxoacyl-CoA + NADH + H(+). It catalyses the reaction a (3S)-3-hydroxyacyl-CoA = a (2E)-enoyl-CoA + H2O. The enzyme catalyses a 4-saturated-(3S)-3-hydroxyacyl-CoA = a (3E)-enoyl-CoA + H2O. The catalysed reaction is (3S)-3-hydroxybutanoyl-CoA = (3R)-3-hydroxybutanoyl-CoA. It carries out the reaction a (3Z)-enoyl-CoA = a 4-saturated (2E)-enoyl-CoA. It catalyses the reaction a (3E)-enoyl-CoA = a 4-saturated (2E)-enoyl-CoA. The protein operates within lipid metabolism; fatty acid beta-oxidation. Its function is as follows. Involved in the aerobic and anaerobic degradation of long-chain fatty acids via beta-oxidation cycle. Catalyzes the formation of 3-oxoacyl-CoA from enoyl-CoA via L-3-hydroxyacyl-CoA. It can also use D-3-hydroxyacyl-CoA and cis-3-enoyl-CoA as substrate. This Salmonella newport (strain SL254) protein is Fatty acid oxidation complex subunit alpha.